Consider the following 505-residue polypeptide: Cobyric acid synthase (505 aa).

Residues 251 to 444 (DIDVAVIKLP…IHGIFDNSEF (194 aa)) enclose the GATase cobBQ-type domain. The active-site Nucleophile is C332. H436 is a catalytic residue.

The protein belongs to the CobB/CobQ family. CobQ subfamily.

The protein operates within cofactor biosynthesis; adenosylcobalamin biosynthesis. In terms of biological role, catalyzes amidations at positions B, D, E, and G on adenosylcobyrinic A,C-diamide. NH(2) groups are provided by glutamine, and one molecule of ATP is hydrogenolyzed for each amidation. This is Cobyric acid synthase from Clostridium novyi (strain NT).